The sequence spans 201 residues: Holliday junction branch migration complex subunit RuvA (201 aa).

The segment at 1–63 is domain I; that stretch reads MIGCLIGEVF…EDAQQLYGFI (63 aa). Residues 64-142 are domain II; the sequence is DAQEKLIFRT…ALSVQATTGS (79 aa). Residues 143–152 are flexible linker; sequence TVTSAQIQFS. The segment at 152 to 201 is domain III; the sequence is SSNSPIAEAEAALQSLGYKPIEAQKAIAAVKADYTEAADLIRAALKSMMK.

This sequence belongs to the RuvA family. As to quaternary structure, homotetramer. Forms an RuvA(8)-RuvB(12)-Holliday junction (HJ) complex. HJ DNA is sandwiched between 2 RuvA tetramers; dsDNA enters through RuvA and exits via RuvB. An RuvB hexamer assembles on each DNA strand where it exits the tetramer. Each RuvB hexamer is contacted by two RuvA subunits (via domain III) on 2 adjacent RuvB subunits; this complex drives branch migration. In the full resolvosome a probable DNA-RuvA(4)-RuvB(12)-RuvC(2) complex forms which resolves the HJ.

It is found in the cytoplasm. The RuvA-RuvB-RuvC complex processes Holliday junction (HJ) DNA during genetic recombination and DNA repair, while the RuvA-RuvB complex plays an important role in the rescue of blocked DNA replication forks via replication fork reversal (RFR). RuvA specifically binds to HJ cruciform DNA, conferring on it an open structure. The RuvB hexamer acts as an ATP-dependent pump, pulling dsDNA into and through the RuvAB complex. HJ branch migration allows RuvC to scan DNA until it finds its consensus sequence, where it cleaves and resolves the cruciform DNA. In Acinetobacter baylyi (strain ATCC 33305 / BD413 / ADP1), this protein is Holliday junction branch migration complex subunit RuvA.